Reading from the N-terminus, the 595-residue chain is L-fucose isomerase (595 aa).

Catalysis depends on proton acceptor residues Glu-341 and Asp-365. Glu-341, Asp-365, and His-531 together coordinate Mn(2+).

Belongs to the L-fucose isomerase family. Requires Mn(2+) as cofactor.

The protein resides in the cytoplasm. The enzyme catalyses L-fucose = L-fuculose. It participates in carbohydrate degradation; L-fucose degradation; L-lactaldehyde and glycerone phosphate from L-fucose: step 1/3. Converts the aldose L-fucose into the corresponding ketose L-fuculose. This is L-fucose isomerase from Clostridium perfringens (strain 13 / Type A).